Consider the following 97-residue polypeptide: Co-chaperonin GroES (97 aa).

This sequence belongs to the GroES chaperonin family. As to quaternary structure, heptamer of 7 subunits arranged in a ring. Interacts with the chaperonin GroEL.

The protein resides in the cytoplasm. Its function is as follows. Together with the chaperonin GroEL, plays an essential role in assisting protein folding. The GroEL-GroES system forms a nano-cage that allows encapsulation of the non-native substrate proteins and provides a physical environment optimized to promote and accelerate protein folding. GroES binds to the apical surface of the GroEL ring, thereby capping the opening of the GroEL channel. This is Co-chaperonin GroES from Aeromonas hydrophila subsp. hydrophila (strain ATCC 7966 / DSM 30187 / BCRC 13018 / CCUG 14551 / JCM 1027 / KCTC 2358 / NCIMB 9240 / NCTC 8049).